The following is a 202-amino-acid chain: ATP-dependent Clp protease proteolytic subunit (202 aa).

Ser106 serves as the catalytic Nucleophile. His131 is an active-site residue.

The protein belongs to the peptidase S14 family. In terms of assembly, fourteen ClpP subunits assemble into 2 heptameric rings which stack back to back to give a disk-like structure with a central cavity, resembling the structure of eukaryotic proteasomes.

It is found in the cytoplasm. The enzyme catalyses Hydrolysis of proteins to small peptides in the presence of ATP and magnesium. alpha-casein is the usual test substrate. In the absence of ATP, only oligopeptides shorter than five residues are hydrolyzed (such as succinyl-Leu-Tyr-|-NHMec, and Leu-Tyr-Leu-|-Tyr-Trp, in which cleavage of the -Tyr-|-Leu- and -Tyr-|-Trp bonds also occurs).. Functionally, cleaves peptides in various proteins in a process that requires ATP hydrolysis. Has a chymotrypsin-like activity. Plays a major role in the degradation of misfolded proteins. The sequence is that of ATP-dependent Clp protease proteolytic subunit from Shewanella sp. (strain W3-18-1).